The chain runs to 293 residues: 4-hydroxy-tetrahydrodipicolinate synthase (293 aa).

A pyruvate-binding site is contributed by Thr-47. Tyr-135 acts as the Proton donor/acceptor in catalysis. Lys-163 serves as the catalytic Schiff-base intermediate with substrate. Residue Val-205 coordinates pyruvate.

This sequence belongs to the DapA family. In terms of assembly, homotetramer; dimer of dimers.

It localises to the cytoplasm. It catalyses the reaction L-aspartate 4-semialdehyde + pyruvate = (2S,4S)-4-hydroxy-2,3,4,5-tetrahydrodipicolinate + H2O + H(+). The protein operates within amino-acid biosynthesis; L-lysine biosynthesis via DAP pathway; (S)-tetrahydrodipicolinate from L-aspartate: step 3/4. Catalyzes the condensation of (S)-aspartate-beta-semialdehyde [(S)-ASA] and pyruvate to 4-hydroxy-tetrahydrodipicolinate (HTPA). The chain is 4-hydroxy-tetrahydrodipicolinate synthase from Leptothrix cholodnii (strain ATCC 51168 / LMG 8142 / SP-6) (Leptothrix discophora (strain SP-6)).